A 530-amino-acid polypeptide reads, in one-letter code: MSSLRPEEARKLATAASVSPLSNCQFSGVVISSIADEQKLEFTNKYKGSCTLLCSYDSQGVVLRVVSDDDRSHVLKEYMIAADTDAAQMGRRSYAVSLDADNLVLRFASDQDQQLFRKVVENVKHLRPKSVFSQRTEESSASQYFQFYGYLSQQQNMMQDYVRTSTYQRAILGNAVDFQDKIVLDVGAGSGILSFFAVQAGAAKVYAIEASNMAQYAQQLVESNNVQHKISVIPGKIEEIELPEKVDVIISEPMGYMLYNERMLETYLHARKWLKPQGKMYPTHGDLHIAPFSDESLYSEQYNKANFWYQSAFHGVDLTTLHKEGMKEYFRQPIVDTFDIRICMAKSVRHVCDFLNDKEDDLHLISIPLEFHILQTGICHGLAFWFDVEFSGSSQNVWLSTSPTAPLTHWYQVRCLLPMPIFIKQGQTLTGRVLLEANRRQSYDVTIDLHIEGTLISSSNTLDLKNPYFRYTGAPVQAPPGTSTQSPSEQYWTQVDTQGSRNSSSMLNGGLSVNGIGDGMDITHGLMHPH.

Positions 141 to 450 constitute an SAM-dependent MTase PRMT-type domain; sequence ASQYFQFYGY…QSYDVTIDLH (310 aa). 6 residues coordinate S-adenosyl-L-methionine: Q154, R163, G187, E209, E238, and T266. Asymmetric dimethylarginine; by autocatalysis is present on R501.

The protein belongs to the class I-like SAM-binding methyltransferase superfamily. Protein arginine N-methyltransferase family. In terms of assembly, homodimer. In terms of processing, the dimethylated protein is the major form.

The protein resides in the cytoplasm. Its subcellular location is the nucleus. It catalyses the reaction L-arginyl-[protein] + 2 S-adenosyl-L-methionine = N(omega),N(omega)-dimethyl-L-arginyl-[protein] + 2 S-adenosyl-L-homocysteine + 2 H(+). Its function is as follows. Methylates (mono- and asymmetric dimethylation) the guanidino nitrogens of arginyl residues in proteins. May methylate histone H3 at 'Arg-17' and activate transcription via chromatin remodeling. This is Histone-arginine methyltransferase CARMER (Art4) from Drosophila erecta (Fruit fly).